The following is a 466-amino-acid chain: MITLYNTLTRQKEVFKPIEPGKVKMYVCGPTVYNYIHIGNARPAINYDVVRRYFEYQGYNVEYVSNFTDVDDKLIKRSQELNQTVPEIAEKYIAAFHEDVGALNVRKATSNPRVMDHMDDIIQFIKDLVDQGYAYESGGDVYFRTRKFEGYGKLSHQSIDDLKVGARIDAGEHKEDALDFTLWKKAKPGEISWDSPFGEGRPGWHIECSVMAFHELGATIDIHAGGSDLQFPHHENEIAQSEAHNHAPFANYWMHNGFINIDNEKMSKSLGNFILVHDIIKEVDPDVLRFFVISVHYRSPINYNLELVESARSGLERIRNSYQLIEERAQIATNIENQQTYIDQIDAILNRFETVMNDDFNTANAITAWYDLAKLANKYVLENTTSTEVIDKFKAVYQIFSDVLGVPLKSKKADELLDEDVEKLIEERNEARKNKDFARADEIRDMLKSQNIILEDTPQGVRFKRG.

C28 contributes to the Zn(2+) binding site. The 'HIGH' region motif lies at 30 to 40 (PTVYNYIHIGN). Zn(2+)-binding residues include C208, H233, and E237. The 'KMSKS' region motif lies at 265–269 (KMSKS). Position 268 (K268) interacts with ATP.

It belongs to the class-I aminoacyl-tRNA synthetase family. As to quaternary structure, monomer. Requires Zn(2+) as cofactor.

It localises to the cytoplasm. The enzyme catalyses tRNA(Cys) + L-cysteine + ATP = L-cysteinyl-tRNA(Cys) + AMP + diphosphate. This is Cysteine--tRNA ligase from Staphylococcus aureus (strain MRSA252).